A 43-amino-acid chain; its full sequence is Hainantoxin F5-22.36 (43 aa).

3 disulfides stabilise this stretch: Cys-1-Cys-19, Cys-8-Cys-24, and Cys-18-Cys-38.

Belongs to the neurotoxin 14 (magi-1) family. 02 (HWTX-XVIc) subfamily. As to expression, expressed by the venom gland.

It is found in the secreted. Probable ion channel inhibitor. In Cyriopagopus hainanus (Chinese bird spider), this protein is Hainantoxin F5-22.36.